We begin with the raw amino-acid sequence, 89 residues long: Small ribosomal subunit protein uS15 (89 aa).

It belongs to the universal ribosomal protein uS15 family. In terms of assembly, part of the 30S ribosomal subunit. Forms a bridge to the 50S subunit in the 70S ribosome, contacting the 23S rRNA.

Functionally, one of the primary rRNA binding proteins, it binds directly to 16S rRNA where it helps nucleate assembly of the platform of the 30S subunit by binding and bridging several RNA helices of the 16S rRNA. In terms of biological role, forms an intersubunit bridge (bridge B4) with the 23S rRNA of the 50S subunit in the ribosome. The polypeptide is Small ribosomal subunit protein uS15 (Geobacillus kaustophilus (strain HTA426)).